Consider the following 91-residue polypeptide: Small ribosomal subunit protein bS20 (91 aa).

A compositionally biased stretch (basic and acidic residues) spans 1-18; that stretch reads MPLHKSAEKRLRQSERRN. The interval 1–26 is disordered; sequence MPLHKSAEKRLRQSERRNARNRSRKK.

This sequence belongs to the bacterial ribosomal protein bS20 family.

Binds directly to 16S ribosomal RNA. This is Small ribosomal subunit protein bS20 from Pelodictyon phaeoclathratiforme (strain DSM 5477 / BU-1).